A 121-amino-acid chain; its full sequence is MYIYWILLGLAIATEITGTLSMKWASVSEGNGGFILMLVMISLSYIFLSFAVKKIALGVAYALWEGIGILFITLFSVLLFDESLSLMKIAGLTTLVAGIVLIKSGTRKVRKPELEVNHGAV.

4 helical membrane-spanning segments follow: residues 1-21, 32-52, 55-75, and 82-102; these read MYIY…GTLS, GGFI…SFAV, IALG…ITLF, and ESLS…IVLI.

Belongs to the drug/metabolite transporter (DMT) superfamily. Small multidrug resistance (SMR) (TC 2.A.7.1) family. MdtJ subfamily. As to quaternary structure, forms a complex with MdtI.

It is found in the cell inner membrane. In terms of biological role, catalyzes the excretion of spermidine. The chain is Spermidine export protein MdtJ from Escherichia coli O127:H6 (strain E2348/69 / EPEC).